The following is a 20-amino-acid chain: SGGAHGEEGSARMXKALTYF.

Belongs to the cytochrome c oxidase subunit 6A family. Component of the cytochrome c oxidase (complex IV, CIV), a multisubunit enzyme composed of 14 subunits. The complex is composed of a catalytic core of 3 subunits MT-CO1, MT-CO2 and MT-CO3, encoded in the mitochondrial DNA, and 11 supernumerary subunits COX4I, COX5A, COX5B, COX6A, COX6B, COX6C, COX7A, COX7B, COX7C, COX8 and NDUFA4, which are encoded in the nuclear genome. The complex exists as a monomer or a dimer and forms supercomplexes (SCs) in the inner mitochondrial membrane with NADH-ubiquinone oxidoreductase (complex I, CI) and ubiquinol-cytochrome c oxidoreductase (cytochrome b-c1 complex, complex III, CIII), resulting in different assemblies (supercomplex SCI(1)III(2)IV(1) and megacomplex MCI(2)III(2)IV(2)). As to expression, liver specific isoform.

The protein localises to the mitochondrion inner membrane. Its pathway is energy metabolism; oxidative phosphorylation. Its function is as follows. Component of the cytochrome c oxidase, the last enzyme in the mitochondrial electron transport chain which drives oxidative phosphorylation. The respiratory chain contains 3 multisubunit complexes succinate dehydrogenase (complex II, CII), ubiquinol-cytochrome c oxidoreductase (cytochrome b-c1 complex, complex III, CIII) and cytochrome c oxidase (complex IV, CIV), that cooperate to transfer electrons derived from NADH and succinate to molecular oxygen, creating an electrochemical gradient over the inner membrane that drives transmembrane transport and the ATP synthase. Cytochrome c oxidase is the component of the respiratory chain that catalyzes the reduction of oxygen to water. Electrons originating from reduced cytochrome c in the intermembrane space (IMS) are transferred via the dinuclear copper A center (CU(A)) of subunit 2 and heme A of subunit 1 to the active site in subunit 1, a binuclear center (BNC) formed by heme A3 and copper B (CU(B)). The BNC reduces molecular oxygen to 2 water molecules unsing 4 electrons from cytochrome c in the IMS and 4 protons from the mitochondrial matrix. The chain is Cytochrome c oxidase subunit 6A1, mitochondrial (COX6A1) from Ovis aries (Sheep).